The primary structure comprises 418 residues: Serine hydroxymethyltransferase (418 aa).

(6S)-5,6,7,8-tetrahydrofolate contacts are provided by residues Leu-121 and 125 to 127 (GHL). Lys-230 bears the N6-(pyridoxal phosphate)lysine mark. (6S)-5,6,7,8-tetrahydrofolate contacts are provided by residues Glu-246 and 355–357 (SPF).

It belongs to the SHMT family. Homodimer. Pyridoxal 5'-phosphate serves as cofactor.

Its subcellular location is the cytoplasm. The enzyme catalyses (6R)-5,10-methylene-5,6,7,8-tetrahydrofolate + glycine + H2O = (6S)-5,6,7,8-tetrahydrofolate + L-serine. It participates in one-carbon metabolism; tetrahydrofolate interconversion. Its pathway is amino-acid biosynthesis; glycine biosynthesis; glycine from L-serine: step 1/1. Catalyzes the reversible interconversion of serine and glycine with tetrahydrofolate (THF) serving as the one-carbon carrier. This reaction serves as the major source of one-carbon groups required for the biosynthesis of purines, thymidylate, methionine, and other important biomolecules. Also exhibits THF-independent aldolase activity toward beta-hydroxyamino acids, producing glycine and aldehydes, via a retro-aldol mechanism. In Streptococcus pneumoniae (strain 70585), this protein is Serine hydroxymethyltransferase.